The primary structure comprises 403 residues: Pantothenate kinase (403 aa).

A phosphoserine mark is found at serine 80, serine 82, and serine 84.

The protein belongs to the type II pantothenate kinase family.

The protein localises to the cytoplasm. It localises to the nucleus. It catalyses the reaction (R)-pantothenate + ATP = (R)-4'-phosphopantothenate + ADP + H(+). It participates in cofactor biosynthesis; coenzyme A biosynthesis; CoA from (R)-pantothenate: step 1/5. Regulated by feedback inhibition by malonyl-CoA. Its function is as follows. Plays a role in the physiological regulation of the intracellular CoA concentration. The protein is Pantothenate kinase of Schizosaccharomyces pombe (strain 972 / ATCC 24843) (Fission yeast).